Here is an 885-residue protein sequence, read N- to C-terminus: DNA mismatch repair protein MutS (885 aa).

626–633 (GPNMGGKS) contributes to the ATP binding site.

This sequence belongs to the DNA mismatch repair MutS family.

Its function is as follows. This protein is involved in the repair of mismatches in DNA. It is possible that it carries out the mismatch recognition step. This protein has a weak ATPase activity. The protein is DNA mismatch repair protein MutS of Burkholderia lata (strain ATCC 17760 / DSM 23089 / LMG 22485 / NCIMB 9086 / R18194 / 383).